The sequence spans 807 residues: Tyrosine-protein kinase receptor torso (807 aa).

The first 28 residues, 1 to 28 (MYSEGKLLKVFLIFAGFIIFSLCGEVVS), serve as a signal peptide directing secretion. The Extracellular segment spans residues 29–370 (QRYPPAPGLL…RAFTPGMLRW (342 aa)). 4 disulfide bridges follow: Cys-46–Cys-61, Cys-81–Cys-203, Cys-210–Cys-239, and Cys-259–Cys-265. Asn-54, Asn-171, Asn-183, and Asn-195 each carry an N-linked (GlcNAc...) asparagine glycan. Asn-307, Asn-323, and Asn-344 each carry an N-linked (GlcNAc...) asparagine glycan. Residues 371-391 (VWAGATAGAGCAAGGLLAATL) form a helical membrane-spanning segment. Topologically, residues 392 to 807 (LCCGHRRATS…SPPVIQTKTA (416 aa)) are cytoplasmic. The 300-residue stretch at 439–738 (VLLHEVIGEG…PTFPELHQKL (300 aa)) folds into the Protein kinase domain. ATP-binding positions include 445 to 453 (IGEGAFGVV) and Lys-468. Asp-607 functions as the Proton acceptor in the catalytic mechanism.

This sequence belongs to the protein kinase superfamily. Tyr protein kinase family. Homodimer; disulfide-linked. The cofactor is Mg(2+). Post-translationally, may be auto-phosphorylated on tyrosine residues. At least one of the 3 cysteine residues Cys-381, Cys-393 or Cys-394 is involved in the formation of interchain disulfide bonds. The disulfide bond sites in the extracellular region are not involved in homodimer formation.

It is found in the cell membrane. It catalyses the reaction L-tyrosyl-[protein] + ATP = O-phospho-L-tyrosyl-[protein] + ADP + H(+). Functionally, probable receptor tyrosine kinase. During postembryonic development, involved in the initiation of metamorphosis probably by inducing the production of ecdysone in response to prothoracicotropic hormone (PTTH). Binding to PTTH stimulates activation of canonical MAPK signaling leading to ERK phosphorylation. The protein is Tyrosine-protein kinase receptor torso of Bombyx mori (Silk moth).